We begin with the raw amino-acid sequence, 441 residues long: Peroxisomal biogenesis factor 3 (441 aa).

The Peroxisomal segment spans residues 1–17 (MAPNQRSRSLLQRHRGK). The helical transmembrane segment at 18 to 39 (VLISLTGIAALFTTGSVVVFFV) threads the bilayer. The Cytoplasmic portion of the chain corresponds to 40–441 (KRWLYKQQLR…GVSSSFSFKP (402 aa)).

This sequence belongs to the peroxin-3 family. In terms of assembly, interacts with MSP1; leading to inhibit the translocase activity of MSP1.

Its subcellular location is the peroxisome membrane. Functionally, involved in peroxisome biosynthesis. Acts as a regulator of MSP1 by inhibiting the ability of MSP1 to unfold target proteins. This is Peroxisomal biogenesis factor 3 (PEX3) from Saccharomyces cerevisiae (strain ATCC 204508 / S288c) (Baker's yeast).